A 233-amino-acid polypeptide reads, in one-letter code: Aspartate/glutamate leucyltransferase (233 aa).

It belongs to the R-transferase family. Bpt subfamily.

The protein resides in the cytoplasm. It carries out the reaction N-terminal L-glutamyl-[protein] + L-leucyl-tRNA(Leu) = N-terminal L-leucyl-L-glutamyl-[protein] + tRNA(Leu) + H(+). The enzyme catalyses N-terminal L-aspartyl-[protein] + L-leucyl-tRNA(Leu) = N-terminal L-leucyl-L-aspartyl-[protein] + tRNA(Leu) + H(+). Functions in the N-end rule pathway of protein degradation where it conjugates Leu from its aminoacyl-tRNA to the N-termini of proteins containing an N-terminal aspartate or glutamate. This chain is Aspartate/glutamate leucyltransferase, found in Vibrio cholerae serotype O1 (strain ATCC 39315 / El Tor Inaba N16961).